A 139-amino-acid polypeptide reads, in one-letter code: Large ribosomal subunit protein uL16 (139 aa).

Residues Met1 to Arg23 form a disordered region. Residues Thr7 to Arg16 show a composition bias toward basic residues.

The protein belongs to the universal ribosomal protein uL16 family. In terms of assembly, part of the 50S ribosomal subunit.

Binds 23S rRNA and is also seen to make contacts with the A and possibly P site tRNAs. The protein is Large ribosomal subunit protein uL16 of Myxococcus xanthus (strain DK1622).